A 773-amino-acid polypeptide reads, in one-letter code: Probable C-mannosyltransferase DPY19L2 (773 aa).

The disordered stretch occupies residues 1-45; it reads MVGPTRSKLREGSSDRPQSSCTGQARRRWSAATMEPQQERSAPQE. Residues 1–122 lie on the Nuclear side of the membrane; it reads MVGPTRSKLR…ALQMHRFSHR (122 aa). Residues 123-143 traverse the membrane as a helical segment; sequence TLFGLAIFVGILHWLHLITLF. At 144-209 the chain is on the perinuclear space side; that stretch reads ENDHHFSHLS…INTVKRFHLY (66 aa). Residues 210–230 traverse the membrane as a helical segment; the sequence is PEVVIAYWYRTIIGIMNLFGI. The Nuclear segment spans residues 231 to 256; sequence ETKTCWNVTRMEPLNEVQSCEGLGDP. A helical transmembrane segment spans residues 257–277; it reads ACFYIGVIFILNGLMMGLFFI. Over 278–311 the chain is Perinuclear space; sequence YSTYLSGSQLGGLITVACYFFNHGEATRVMWTPP. Residues 312 to 332 traverse the membrane as a helical segment; it reads LRESFSYPFLVLQMYILTIIL. Residues 333 to 358 are Nuclear-facing; that stretch reads RTSTVHKKHYMALCFSNVAFMLPWQF. The chain crosses the membrane as a helical span at residues 359–379; it reads AQFILFTQIASLFPMYVVGYI. Residues 380 to 386 lie on the Perinuclear space side of the membrane; the sequence is EPSKFQK. The chain crosses the membrane as a helical span at residues 387–407; sequence IIYVNMSSVALCFILMFGNSM. At 408–437 the chain is on the nuclear side; the sequence is YLSSYYSSCLLVTWAIMQKKSKIQKLGGTE. A helical membrane pass occupies residues 438-458; it reads LQFWLIQGCFWWCGTIILKFL. The Perinuclear space segment spans residues 459 to 507; it reads TSKICGVSDHIRLSDLIAARILRYTDFDTLIYTCAPEFDFMEQATPLRY. The chain crosses the membrane as a helical span at residues 508–528; that stretch reads IKTLLLPLILVITYLIFKKIV. Topologically, residues 529–548 are nuclear; the sequence is RDIMCVLYTNTYVRKQLLDN. Residues 549-569 form a helical membrane-spanning segment; the sequence is AELIFHTLQLLAFTGLAILIM. Over 570–590 the chain is Perinuclear space; that stretch reads RLKLFLTPHMCIMASLICSQR. Residues 591-611 form a helical membrane-spanning segment; it reads LFGWLFCRIHFENVVFGILTM. The Nuclear segment spans residues 612–773; it reads MSIQGCANLH…NSMYRVLKIN (162 aa).

The protein belongs to the dpy-19 family. In terms of assembly, interacts with FAM209. In terms of tissue distribution, predominantly expressed in testis. Present in testis but absent from epididymal sperm (at protein level).

The protein resides in the nucleus inner membrane. Its function is as follows. Probable C-mannosyltransferase that mediates C-mannosylation of tryptophan residues on target proteins. In terms of biological role, required during spermatogenesis for sperm head elongation and acrosome formation. Also plays a role in acrosome attachment to the nuclear envelope. The chain is Probable C-mannosyltransferase DPY19L2 (Dpy19l2) from Mus musculus (Mouse).